A 59-amino-acid polypeptide reads, in one-letter code: Inner kinetochore subunit fta6 (59 aa).

In terms of assembly, component of the inner kinetochore constitutive centromere-associated network (CCAN) (also known as central kinetochore Sim4 complex in fission yeast), which is composed of at least cnl2, cnp3, cnp20, fta1, fta2, fta3, fta4, fta6, fta7, mal2, mhf1, mhf2, mis6, mis15, mis17, sim4 and wip1.

The protein resides in the nucleus. It is found in the chromosome. It localises to the centromere. Its subcellular location is the kinetochore. The protein localises to the cytoplasm. The protein resides in the cytoskeleton. It is found in the microtubule organizing center. It localises to the spindle pole body. Component of the kinetochore, a multiprotein complex that assembles on centromeric DNA and attaches chromosomes to spindle microtubules, mediating chromosome segregation and sister chromatid segregation during meiosis and mitosis. Component of the inner kinetochore constitutive centromere-associated network (CCAN), which serves as a structural platform for outer kinetochore assembly. In Schizosaccharomyces pombe (strain 972 / ATCC 24843) (Fission yeast), this protein is Inner kinetochore subunit fta6 (fta6).